The chain runs to 87 residues: MANIKSNEKRLRQNIKRNLNNKGQKTKLKTNVKNFHKEINLDNLGNVYSQADRLARKGIISTNRARRLKSRNVAVLNKTQVTAVEGK.

The protein belongs to the bacterial ribosomal protein bS20 family.

Binds directly to 16S ribosomal RNA. This chain is Small ribosomal subunit protein bS20, found in Mycoplasma pneumoniae (strain ATCC 29342 / M129 / Subtype 1) (Mycoplasmoides pneumoniae).